Consider the following 169-residue polypeptide: Crossover junction endodeoxyribonuclease RuvC (169 aa).

Active-site residues include aspartate 7, glutamate 67, and aspartate 139. 3 residues coordinate Mg(2+): aspartate 7, glutamate 67, and aspartate 139.

It belongs to the RuvC family. As to quaternary structure, homodimer which binds Holliday junction (HJ) DNA. The HJ becomes 2-fold symmetrical on binding to RuvC with unstacked arms; it has a different conformation from HJ DNA in complex with RuvA. In the full resolvosome a probable DNA-RuvA(4)-RuvB(12)-RuvC(2) complex forms which resolves the HJ. Requires Mg(2+) as cofactor.

The protein resides in the cytoplasm. The enzyme catalyses Endonucleolytic cleavage at a junction such as a reciprocal single-stranded crossover between two homologous DNA duplexes (Holliday junction).. The RuvA-RuvB-RuvC complex processes Holliday junction (HJ) DNA during genetic recombination and DNA repair. Endonuclease that resolves HJ intermediates. Cleaves cruciform DNA by making single-stranded nicks across the HJ at symmetrical positions within the homologous arms, yielding a 5'-phosphate and a 3'-hydroxyl group; requires a central core of homology in the junction. The consensus cleavage sequence is 5'-(A/T)TT(C/G)-3'. Cleavage occurs on the 3'-side of the TT dinucleotide at the point of strand exchange. HJ branch migration catalyzed by RuvA-RuvB allows RuvC to scan DNA until it finds its consensus sequence, where it cleaves and resolves the cruciform DNA. This is Crossover junction endodeoxyribonuclease RuvC from Rhodospirillum rubrum (strain ATCC 11170 / ATH 1.1.1 / DSM 467 / LMG 4362 / NCIMB 8255 / S1).